Here is a 1043-residue protein sequence, read N- to C-terminus: Ack-related non-receptor tyrosine kinase (1043 aa).

Residues 113–379 (ITLCKELGQG…SDIVAKFPER (267 aa)) enclose the Protein kinase domain. Residues 119-127 (LGQGEFGSV) and K146 contribute to the ATP site. The Proton acceptor role is filled by D241. The SH3 domain maps to 379 to 444 (RRAQSVRAVV…RPTDTVAHLG (66 aa)). A disordered region spans residues 443-481 (LGSEPPCSNGTIENGFSEKEKGGKKNKKAEKESERERKK). The segment covering 458 to 481 (FSEKEKGGKKNKKAEKESERERKK) has biased composition (basic and acidic residues). Positions 484 to 498 (ISEPVGDVRHTCHVG) constitute a CRIB domain. 4 disordered regions span residues 514–644 (MCPT…SAAN), 790–842 (KINE…GWSS), 859–898 (KQAS…LSVR), and 932–993 (LIDG…RQFP). Positions 516-543 (PTSSSPSTSRGSQASPAPSHTSSSTTSS) are enriched in low complexity. The span at 610–624 (GNQHSVQVHDQFSSL) shows a compositional bias: polar residues. A compositionally biased stretch (low complexity) spans 630 to 644 (SLTPTAPPLTASAAN). The stretch at 785 to 812 (EQEVRKINEKSAREHRKTEDLLREERQK) forms a coiled coil. The segment covering 790–818 (KINEKSAREHRKTEDLLREERQKEQKPGE) has biased composition (basic and acidic residues). The segment covering 825–842 (PAESLYSTRTPQQEGWSS) has biased composition (polar residues). Low complexity predominate over residues 870–884 (PTSSRLSTLDRSSIS).

This sequence belongs to the protein kinase superfamily. Tyr protein kinase family. Requires Mg(2+) as cofactor.

It carries out the reaction L-tyrosyl-[protein] + ATP = O-phospho-L-tyrosyl-[protein] + ADP + H(+). The catalysed reaction is L-seryl-[protein] + ATP = O-phospho-L-seryl-[protein] + ADP + H(+). It catalyses the reaction L-threonyl-[protein] + ATP = O-phospho-L-threonyl-[protein] + ADP + H(+). In terms of biological role, probable tyrosine protein kinase which plays a role in vulva development, probably by acting as a negative regulator of the let-23/EGFR and let-60/ras pathway. Involved in the negative regulation of germline development. The polypeptide is Ack-related non-receptor tyrosine kinase (Caenorhabditis elegans).